We begin with the raw amino-acid sequence, 557 residues long: Leucine-rich glioma-inactivated protein 1 (557 aa).

Positions 1–34 (MESESIRRMGNACIPLKRIAYFLCLFSVVLLTEG) are cleaved as a signal peptide. Positions 35–72 (KKPAKPKCPAVCTCSKDNALCENARSIPRTVPPDVISL) constitute an LRRNT domain. 3 LRR repeats span residues 92–113 (SLQL…AFIG), 116–137 (HLEY…TFRG), and 140–161 (SLIH…IFKG). The 51-residue stretch at 173–223 (NSFNCDCKLKWLVEWLGHTNATVEDIYCEGPPEYKKRKINSLSPKDFDCII) folds into the LRRCT domain. Asn192 carries N-linked (GlcNAc...) asparagine glycosylation. EAR repeat units follow at residues 225–267 (EFAK…EWDH), 271–313 (TFRN…KRDG), 317–364 (KFIK…KWNG), 366–415 (GFYS…QWSK), 419–462 (LFIN…KWGG), 464–506 (SFQD…NWDA), and 510–552 (KFVK…KHVI). The N-linked (GlcNAc...) asparagine glycan is linked to Asn277. A glycan (N-linked (GlcNAc...) asparagine) is linked at Asn422.

As to quaternary structure, oligomer. Interacts with KCNA1 within a complex containing KCNA1, KCNA4 and KCNAB1. Can bind to ADAM11 and ADAM23. Part of a complex containing ADAM22, DLG4/PSD95 and CACNG2 (stargazin). In terms of processing, glycosylated. In terms of tissue distribution, expressed in brain. High levels found in hippocampus, thalamic nuclei, neocortex, and molecular and granule cell layers of the cerebellum.

The protein resides in the secreted. It is found in the synapse. The protein localises to the cytoplasm. Plays a role in suppressing the production of MMP1/3 through the phosphatidylinositol 3-kinase/ERK pathway. Regulates voltage-gated potassium channels assembled from KCNA1, KCNA4 and KCNAB1. It slows down channel inactivation by precluding channel closure mediated by the KCNAB1 subunit. Ligand for ADAM22 that positively regulates synaptic transmission mediated by AMPA-type glutamate receptors. This is Leucine-rich glioma-inactivated protein 1 (Lgi1) from Rattus norvegicus (Rat).